A 136-amino-acid polypeptide reads, in one-letter code: Small ribosomal subunit protein uS8 (136 aa).

The protein belongs to the universal ribosomal protein uS8 family. In terms of assembly, part of the 30S ribosomal subunit. Contacts proteins S5 and S12.

One of the primary rRNA binding proteins, it binds directly to 16S rRNA central domain where it helps coordinate assembly of the platform of the 30S subunit. The sequence is that of Small ribosomal subunit protein uS8 from Persephonella marina (strain DSM 14350 / EX-H1).